Consider the following 104-residue polypeptide: Small ribosomal subunit protein uS10 (104 aa).

Belongs to the universal ribosomal protein uS10 family. As to quaternary structure, part of the 30S ribosomal subunit.

Its function is as follows. Involved in the binding of tRNA to the ribosomes. This Aquifex aeolicus (strain VF5) protein is Small ribosomal subunit protein uS10.